Consider the following 115-residue polypeptide: Thioredoxin-1 (115 aa).

The region spanning 2–114 (LKRCNFKNQV…RQKVLEHVSA (113 aa)) is the Thioredoxin domain. Active-site nucleophile residues include C39 and C42. C39 and C42 are oxidised to a cystine.

This sequence belongs to the thioredoxin family. In terms of tissue distribution, expressed in ASJ and ASI ciliated sensory neurons. Expressed in the intestine (at protein level).

In terms of biological role, participates in various redox reactions through the reversible oxidation of its active center dithiol to a disulfide and catalyzes dithiol-disulfide exchange reactions. Shown to facilitate the reduction of insulin disulfide bonds. Might play a role in the reversible nitrosylation of cysteine residues in target proteins, and thereby contributing to the response to intracellular nitric oxide. Shapes the ASJ sensory neuron biphasic response to nitric oxide (NO) exposure; trans-nitrosylation activity might inhibit calcium flux to the cytoplasm in ASJ neurons when exposed to a NO stimulus, whereas de-nitrosylation activity might promote calcium flux when NO is diminished. By regulating the NO-induced ASJ sensory neuron activity, mediates the avoidance response to NO-producing organisms like P.aeruginosa. Positively regulates life span extension under normal and caloric restriction conditions, dauer formation and the oxidative stress response. Contributes to the down-regulation of expression of the insulin-like neuropeptide daf-28 in the ASJ neurons in a redox-independent fashion, thereby promoting dauer formation. Negatively regulates the nuclear localization of the intestinal skn-1 transcription factor in a p38 MAPK pathway-dependent and redox-independent fashion. The chain is Thioredoxin-1 (trx-1) from Caenorhabditis elegans.